Here is a 291-residue protein sequence, read N- to C-terminus: Segregation and condensation protein B (291 aa).

This sequence belongs to the ScpB family. Homodimer. Homodimerization may be required to stabilize the binding of ScpA to the Smc head domains. Component of a cohesin-like complex composed of ScpA, ScpB and the Smc homodimer, in which ScpA and ScpB bind to the head domain of Smc. The presence of the three proteins is required for the association of the complex with DNA.

Its subcellular location is the cytoplasm. Functionally, participates in chromosomal partition during cell division. May act via the formation of a condensin-like complex containing Smc and ScpA that pull DNA away from mid-cell into both cell halves. The chain is Segregation and condensation protein B from Mycoplasmoides gallisepticum (strain R(low / passage 15 / clone 2)) (Mycoplasma gallisepticum).